The chain runs to 233 residues: Large ribosomal subunit protein uL1 (233 aa).

It belongs to the universal ribosomal protein uL1 family. In terms of assembly, part of the 50S ribosomal subunit.

Binds directly to 23S rRNA. The L1 stalk is quite mobile in the ribosome, and is involved in E site tRNA release. Its function is as follows. Protein L1 is also a translational repressor protein, it controls the translation of the L11 operon by binding to its mRNA. This chain is Large ribosomal subunit protein uL1, found in Shewanella woodyi (strain ATCC 51908 / MS32).